Reading from the N-terminus, the 126-residue chain is Prefoldin subunit beta (126 aa).

Belongs to the prefoldin subunit beta family. Heterohexamer of two alpha and four beta subunits.

The protein resides in the cytoplasm. Its function is as follows. Molecular chaperone capable of stabilizing a range of proteins. Seems to fulfill an ATP-independent, HSP70-like function in archaeal de novo protein folding. The protein is Prefoldin subunit beta (pfdB) of Pyrobaculum aerophilum (strain ATCC 51768 / DSM 7523 / JCM 9630 / CIP 104966 / NBRC 100827 / IM2).